The primary structure comprises 30 residues: Cycloviolacin-O5 (30 aa).

Residues 1 to 30 (GTPCGESCVWIPCISSAVGCSCKNKVCYKN) constitute a cross-link (cyclopeptide (Gly-Asn)). 3 disulfide bridges follow: cysteine 4/cysteine 20, cysteine 8/cysteine 22, and cysteine 13/cysteine 27.

In terms of processing, this is a cyclic peptide.

In terms of biological role, probably participates in a plant defense mechanism. This Viola odorata (Sweet violet) protein is Cycloviolacin-O5.